The primary structure comprises 185 residues: Ribosome-recycling factor (185 aa).

Belongs to the RRF family.

It localises to the cytoplasm. In terms of biological role, responsible for the release of ribosomes from messenger RNA at the termination of protein biosynthesis. May increase the efficiency of translation by recycling ribosomes from one round of translation to another. The protein is Ribosome-recycling factor of Teredinibacter turnerae (strain ATCC 39867 / T7901).